Reading from the N-terminus, the 173-residue chain is Small ribosomal subunit protein uS9 (173 aa).

Positions 20 to 53 are disordered; the sequence is SYTTESEVPVEGEYTSESVASRFGEPQPAAGLGR.

This sequence belongs to the universal ribosomal protein uS9 family.

The protein is Small ribosomal subunit protein uS9 of Streptomyces avermitilis (strain ATCC 31267 / DSM 46492 / JCM 5070 / NBRC 14893 / NCIMB 12804 / NRRL 8165 / MA-4680).